The chain runs to 47 residues: MSETIEDRLLNKQVCMRCNARNPTDAESCRKCGYKNLRTKASERRSA.

Belongs to the eukaryotic ribosomal protein eL40 family.

In Halobacterium salinarum (strain ATCC 29341 / DSM 671 / R1), this protein is Large ribosomal subunit protein eL40.